Here is a 216-residue protein sequence, read N- to C-terminus: Cytidylate kinase (216 aa).

Residue Gly-9–Thr-17 participates in ATP binding.

This sequence belongs to the cytidylate kinase family. Type 1 subfamily.

The protein resides in the cytoplasm. The catalysed reaction is CMP + ATP = CDP + ADP. The enzyme catalyses dCMP + ATP = dCDP + ADP. The chain is Cytidylate kinase from Caulobacter sp. (strain K31).